An 889-amino-acid polypeptide reads, in one-letter code: Chromatin structure-remodeling complex subunit RSC2 (889 aa).

Positions 12–120 (QNSSALYKDL…KYLKDTIYPN (109 aa)) constitute a Bromo 1 domain. The segment at 151-268 (EKAEEVARAN…QVSRTQVKRG (118 aa)) is disordered. Residues 158–174 (RANAARAESSSSMNSTE) are compositionally biased toward low complexity. Residues 197 to 209 (NNDEDYEATDMDI) show a composition bias toward acidic residues. The segment covering 210-222 (DNPKDADFPDLIR) has biased composition (basic and acidic residues). Polar residues predominate over residues 241–250 (STTPSHSGTP). Over residues 255–268 (PRHRQVSRTQVKRG) the composition is skewed to basic residues. The 103-residue stretch at 280 to 382 (RMKNVMKVLK…KTFTSLARFE (103 aa)) folds into the Bromo 2 domain. The region spanning 408-526 (ISYHVGDWAL…ESDKIFNKIR (119 aa)) is the BAH domain. The tract at residues 601–624 (GEYATSDDCPRYIIRPNDSPEEGQ) is disordered. Tyr-612 carries the post-translational modification Phosphotyrosine. A Phosphoserine modification is found at Ser-682. The interval 831–865 (EVEETMEDVTGKDKDDDGLEPDVENEKESLPGPFV) is disordered.

The protein belongs to the RSC1 family. In terms of assembly, component of the two forms of the RSC complex composed of at least either RSC1 or RSC2, and ARP7, ARP9, LDB7, NPL6, RSC3, RSC30, RSC4, RSC58, RSC6, RSC8, RSC9, SFH1, STH1, HTL1 and probably RTT102. The complexes interact with histone and histone variant components of centromeric chromatin.

The protein resides in the nucleus. In terms of biological role, component of the chromatin structure remodeling complex (RSC), which is involved in transcription regulation and nucleosome positioning. RSC is responsible for the transfer of a histone octamer from a nucleosome core particle to naked DNA. The reaction requires ATP and involves an activated RSC-nucleosome intermediate. Remodeling reaction also involves DNA translocation, DNA twist and conformational change. As a reconfigurer of centromeric and flanking nucleosomes, RSC complex is required both for proper kinetochore function in chromosome segregation and, via a PKC1-dependent signaling pathway, for organization of the cellular cytoskeleton. This subunit is involved in meiotic sporulation through regulating IME2 expression, and is also essential for 2-micron plasmid maintenance and for normal REP1 protein localization. The chain is Chromatin structure-remodeling complex subunit RSC2 (RSC2) from Saccharomyces cerevisiae (strain ATCC 204508 / S288c) (Baker's yeast).